We begin with the raw amino-acid sequence, 202 residues long: Nucleoside triphosphate pyrophosphatase (202 aa).

Aspartate 79 acts as the Proton acceptor in catalysis.

This sequence belongs to the Maf family. The cofactor is a divalent metal cation.

The protein resides in the cytoplasm. The catalysed reaction is a ribonucleoside 5'-triphosphate + H2O = a ribonucleoside 5'-phosphate + diphosphate + H(+). It catalyses the reaction a 2'-deoxyribonucleoside 5'-triphosphate + H2O = a 2'-deoxyribonucleoside 5'-phosphate + diphosphate + H(+). Functionally, nucleoside triphosphate pyrophosphatase. May have a dual role in cell division arrest and in preventing the incorporation of modified nucleotides into cellular nucleic acids. The chain is Nucleoside triphosphate pyrophosphatase from Rhodopseudomonas palustris (strain BisB5).